Reading from the N-terminus, the 202-residue chain is Dephospho-CoA kinase (202 aa).

In terms of domain architecture, DPCK spans lysine 6–leucine 202. ATP is bound at residue serine 14–glutamate 19.

The protein belongs to the CoaE family.

It is found in the cytoplasm. The enzyme catalyses 3'-dephospho-CoA + ATP = ADP + CoA + H(+). Its pathway is cofactor biosynthesis; coenzyme A biosynthesis; CoA from (R)-pantothenate: step 5/5. Its function is as follows. Catalyzes the phosphorylation of the 3'-hydroxyl group of dephosphocoenzyme A to form coenzyme A. The protein is Dephospho-CoA kinase of Chlamydia caviae (strain ATCC VR-813 / DSM 19441 / 03DC25 / GPIC) (Chlamydophila caviae).